The sequence spans 80 residues: RNA-binding protein Hfq (80 aa).

The region spanning 10–70 (DLFLNTVRKQ…ISTIMPGQPL (61 aa)) is the Sm domain.

The protein belongs to the Hfq family. Homohexamer.

In terms of biological role, RNA chaperone that binds small regulatory RNA (sRNAs) and mRNAs to facilitate mRNA translational regulation in response to envelope stress, environmental stress and changes in metabolite concentrations. Also binds with high specificity to tRNAs. In Rhizobium meliloti (strain 1021) (Ensifer meliloti), this protein is RNA-binding protein Hfq.